Reading from the N-terminus, the 263-residue chain is 4-hydroxy-tetrahydrodipicolinate reductase (263 aa).

NAD(+) contacts are provided by residues 7-12 (GASGRM) and Asp-33. Arg-34 provides a ligand contact to NADP(+). NAD(+)-binding positions include 96 to 98 (GTT) and 120 to 123 (APNM). Residue His-153 is the Proton donor/acceptor of the active site. Residue His-154 coordinates (S)-2,3,4,5-tetrahydrodipicolinate. The Proton donor role is filled by Lys-157. 163 to 164 (GT) contacts (S)-2,3,4,5-tetrahydrodipicolinate.

Belongs to the DapB family.

The protein localises to the cytoplasm. It catalyses the reaction (S)-2,3,4,5-tetrahydrodipicolinate + NAD(+) + H2O = (2S,4S)-4-hydroxy-2,3,4,5-tetrahydrodipicolinate + NADH + H(+). It carries out the reaction (S)-2,3,4,5-tetrahydrodipicolinate + NADP(+) + H2O = (2S,4S)-4-hydroxy-2,3,4,5-tetrahydrodipicolinate + NADPH + H(+). It participates in amino-acid biosynthesis; L-lysine biosynthesis via DAP pathway; (S)-tetrahydrodipicolinate from L-aspartate: step 4/4. Functionally, catalyzes the conversion of 4-hydroxy-tetrahydrodipicolinate (HTPA) to tetrahydrodipicolinate. In Ralstonia pickettii (strain 12J), this protein is 4-hydroxy-tetrahydrodipicolinate reductase.